We begin with the raw amino-acid sequence, 273 residues long: Tryptase (273 aa).

Positions 1-18 (MLKLLLLTLPLLSSLVHA) are cleaved as a signal peptide. Residues 19 to 28 (APSLAMPREG) constitute a propeptide, activation peptide. One can recognise a Peptidase S1 domain in the interval 29–270 (IVGGQEASGN…YLDWIYRYVP (242 aa)). N49 is a glycosylation site (N-linked (GlcNAc...) asparagine). C57 and C73 are joined by a disulfide. Residues H72 and D119 each act as charge relay system in the active site. 3 disulfide bridges follow: C153–C228, C186–C209, and C218–C246. S222 (charge relay system) is an active-site residue.

Belongs to the peptidase S1 family. Tryptase subfamily. In terms of assembly, homotetramer. Glycosylated. As to expression, mast cells.

Its subcellular location is the secreted. It carries out the reaction Preferential cleavage: Arg-|-Xaa, Lys-|-Xaa, but with more restricted specificity than trypsin.. Its function is as follows. Tryptase is the major neutral protease present in mast cells and is secreted upon the coupled activation-degranulation response of this cell type. May play a role in innate immunity. This Rattus norvegicus (Rat) protein is Tryptase (Tpsab1).